The primary structure comprises 947 residues: Leucine-rich repeat-containing protein 37B (947 aa).

An N-terminal signal peptide occupies residues 1–27 (MSWLRFWGPWPLLTWQLLSLLVKEAQP). Over 28–905 (LVWVKDPLQL…EVPGDDYKNK (878 aa)) the chain is Extracellular. Disordered stretches follow at residues 42–88 (LGPP…ALPQ), 226–257 (YLSM…QVGL), 294–458 (EVEP…PEPT), and 484–514 (SLTE…EQKA). The span at 311–320 (SMESLAQTPL) shows a compositional bias: polar residues. Residue Asn358 is glycosylated (N-linked (GlcNAc...) asparagine). 3 stretches are compositionally biased toward polar residues: residues 404–415 (GQAQHSHLTEAT), 436–445 (SPTTEETSAQ), and 495–507 (LESS…QSET). LRR repeat units follow at residues 556 to 577 (IFTT…VWKA), 580 to 601 (WTEK…SFEG), 604 to 625 (YLQY…TFES), 628 to 649 (FLQY…TFQA), 655 to 676 (FLHN…YLFE), and 679 to 699 (ALKY…KNIL). N-linked (GlcNAc...) asparagine glycosylation is present at Asn789. Residues 867–897 (DTDQQKTNYINENMEQNEQKEQKSSELMKEV) are a coiled coil. Residues 906 to 926 (LIFAISVTVILIILIIIFCLI) traverse the membrane as a helical segment. The Cytoplasmic segment spans residues 927 to 947 (EVNSHKRASEKYKDNPSISGA).

The protein localises to the membrane. This is Leucine-rich repeat-containing protein 37B (LRRC37B) from Homo sapiens (Human).